The following is a 362-amino-acid chain: UDP-N-acetylglucosamine--N-acetylmuramyl-(pentapeptide) pyrophosphoryl-undecaprenol N-acetylglucosamine transferase (362 aa).

UDP-N-acetyl-alpha-D-glucosamine is bound by residues 15–17 (TGG), Asn-127, Arg-165, Ser-191, Ile-247, 266–271 (ALTVSE), and Gln-292.

It belongs to the glycosyltransferase 28 family. MurG subfamily.

The protein resides in the cell inner membrane. It carries out the reaction di-trans,octa-cis-undecaprenyl diphospho-N-acetyl-alpha-D-muramoyl-L-alanyl-D-glutamyl-meso-2,6-diaminopimeloyl-D-alanyl-D-alanine + UDP-N-acetyl-alpha-D-glucosamine = di-trans,octa-cis-undecaprenyl diphospho-[N-acetyl-alpha-D-glucosaminyl-(1-&gt;4)]-N-acetyl-alpha-D-muramoyl-L-alanyl-D-glutamyl-meso-2,6-diaminopimeloyl-D-alanyl-D-alanine + UDP + H(+). Its pathway is cell wall biogenesis; peptidoglycan biosynthesis. Cell wall formation. Catalyzes the transfer of a GlcNAc subunit on undecaprenyl-pyrophosphoryl-MurNAc-pentapeptide (lipid intermediate I) to form undecaprenyl-pyrophosphoryl-MurNAc-(pentapeptide)GlcNAc (lipid intermediate II). The protein is UDP-N-acetylglucosamine--N-acetylmuramyl-(pentapeptide) pyrophosphoryl-undecaprenol N-acetylglucosamine transferase of Shewanella putrefaciens (strain CN-32 / ATCC BAA-453).